A 153-amino-acid chain; its full sequence is Small ribosomal subunit protein uS7c (153 aa).

It belongs to the universal ribosomal protein uS7 family. Part of the 30S ribosomal subunit.

It localises to the plastid. Functionally, one of the primary rRNA binding proteins, it binds directly to 16S rRNA where it nucleates assembly of the head domain of the 30S subunit. This Helicosporidium sp. subsp. Simulium jonesii (Green alga) protein is Small ribosomal subunit protein uS7c (rps7).